The following is a 114-amino-acid chain: Putative toxin HigB3 (114 aa).

The protein belongs to the mycobacterial HigB family.

Putative toxic component of a type II toxin-antitoxin (TA) system. Its cognate antitoxin would be HigA3. Not toxic upon expression in M.smegmatis. This Mycobacterium tuberculosis (strain ATCC 25618 / H37Rv) protein is Putative toxin HigB3.